We begin with the raw amino-acid sequence, 216 residues long: 3-keto-L-gulonate-6-phosphate decarboxylase UlaD (216 aa).

Aspartate 11 is a substrate binding site. 2 residues coordinate Mg(2+): glutamate 33 and aspartate 62. Residue arginine 192 coordinates substrate.

The protein belongs to the HPS/KGPDC family. KGPDC subfamily. Homodimer. It depends on Mg(2+) as a cofactor.

It carries out the reaction 3-dehydro-L-gulonate 6-phosphate + H(+) = L-xylulose 5-phosphate + CO2. Its pathway is cofactor degradation; L-ascorbate degradation; D-xylulose 5-phosphate from L-ascorbate: step 2/4. Its function is as follows. Catalyzes the decarboxylation of 3-keto-L-gulonate-6-P into L-xylulose-5-P. Is involved in the anaerobic L-ascorbate utilization. In Salmonella typhi, this protein is 3-keto-L-gulonate-6-phosphate decarboxylase UlaD.